A 389-amino-acid polypeptide reads, in one-letter code: Probable family 17 glucosidase SCW10 (389 aa).

Positions 1–18 (MRFSNFLTVSALLTGALG) are cleaved as a signal peptide. A propeptide spanning residues 19–29 (APAVRHKHEKR) is cleaved from the precursor. Residues 70–134 (ASQATTSTLE…SSASSSISAS (65 aa)) are disordered. Asn279 carries N-linked (GlcNAc...) asparagine glycosylation. Residue Glu326 is the Nucleophile of the active site.

The protein belongs to the glycosyl hydrolase 17 family. In terms of processing, glycosylated.

The protein localises to the secreted. The protein resides in the cell wall. Glucanases possibly play a role in cell expansion during growth, in cell-cell fusion during mating, and in spore release during sporulation. This chain is Probable family 17 glucosidase SCW10 (SCW10), found in Saccharomyces cerevisiae (strain ATCC 204508 / S288c) (Baker's yeast).